A 25-amino-acid chain; its full sequence is RGSNLTIHPLRNIRDIFYVGNITIG.

N-linked (GlcNAc...) asparagine glycosylation is found at Asn-4 and Asn-21.

It belongs to the peptidase A1 family. In terms of processing, N-glycosylated. In terms of tissue distribution, placental cotyledons.

It localises to the secreted. The protein localises to the extracellular space. This chain is Pregnancy-associated glycoprotein 74, found in Bison bison (American bison).